Here is a 132-residue protein sequence, read N- to C-terminus: U-scoloptoxin(05)-Er3a (132 aa).

The signal sequence occupies residues 1 to 19 (MRSWFVFVALLAVVFLPSS).

This sequence belongs to the scoloptoxin-05 family. Contains 5 disulfide bonds. In terms of tissue distribution, expressed by the venom gland.

The protein resides in the secreted. The polypeptide is U-scoloptoxin(05)-Er3a (Ethmostigmus rubripes (Giant centipede)).